The chain runs to 103 residues: MHVKKGDKVQVMTGKDKGKQGVVLTAMPKKDRVIVEGVNMIKKHSKPSQLNPQGGIVEKEAPIHVSNVMLIDPKTGNPTRVGFTVVDGKKVRIAKKSGEALDK.

Belongs to the universal ribosomal protein uL24 family. In terms of assembly, part of the 50S ribosomal subunit.

Functionally, one of two assembly initiator proteins, it binds directly to the 5'-end of the 23S rRNA, where it nucleates assembly of the 50S subunit. One of the proteins that surrounds the polypeptide exit tunnel on the outside of the subunit. This is Large ribosomal subunit protein uL24 from Exiguobacterium sibiricum (strain DSM 17290 / CCUG 55495 / CIP 109462 / JCM 13490 / 255-15).